Consider the following 368-residue polypeptide: Germination protease (368 aa).

The propeptide occupies 1 to 15 (MKEPLDLSKYSVRTD).

This sequence belongs to the peptidase A25 family. As to quaternary structure, homotetramer. In terms of processing, autoproteolytically processed. The inactive tetrameric zymogen termed p46 autoprocesses to a smaller form termed p41, which is active only during spore germination.

The enzyme catalyses Endopeptidase action with P4 Glu or Asp, P1 preferably Glu &gt; Asp, P1' hydrophobic and P2' Ala.. Its function is as follows. Initiates the rapid degradation of small, acid-soluble proteins during spore germination. In Bacillus anthracis (strain A0248), this protein is Germination protease.